The chain runs to 224 residues: MTEKRAVILLSGGLDSATVVAMAKAEGYSCYTMSFDYGQRHRAELNAAARVARDLGVVEHKVIGLNLDGIGGSALTDSSIDVPEAPGEGIPVTYVPARNTVFLSLALGWAEVLEARDIFIGVNAVDYSGYPDCRPEFVEAFERMANLATKAGVEGQGFRIQAPLQNMSKAQIVQAGMARGVDYSLTVSCYQADDDGRACGKCDSCRLRADGFKAAGIEDPTRYF.

ATP is bound at residue 10 to 20 (LSGGLDSATVV). Zn(2+) contacts are provided by Cys189, Cys199, Cys202, and Cys205.

Belongs to the QueC family. Zn(2+) is required as a cofactor.

The enzyme catalyses 7-carboxy-7-deazaguanine + NH4(+) + ATP = 7-cyano-7-deazaguanine + ADP + phosphate + H2O + H(+). It functions in the pathway purine metabolism; 7-cyano-7-deazaguanine biosynthesis. In terms of biological role, catalyzes the ATP-dependent conversion of 7-carboxy-7-deazaguanine (CDG) to 7-cyano-7-deazaguanine (preQ(0)). This is 7-cyano-7-deazaguanine synthase from Pseudomonas putida (strain ATCC 47054 / DSM 6125 / CFBP 8728 / NCIMB 11950 / KT2440).